Reading from the N-terminus, the 142-residue chain is Large ribosomal subunit protein uL13 (142 aa).

This sequence belongs to the universal ribosomal protein uL13 family. In terms of assembly, part of the 50S ribosomal subunit.

In terms of biological role, this protein is one of the early assembly proteins of the 50S ribosomal subunit, although it is not seen to bind rRNA by itself. It is important during the early stages of 50S assembly. The chain is Large ribosomal subunit protein uL13 from Buchnera aphidicola subsp. Schizaphis graminum (strain Sg).